The sequence spans 310 residues: Homoserine kinase (310 aa).

91 to 101 contributes to the ATP binding site; the sequence is PLARGLGSSAA.

This sequence belongs to the GHMP kinase family. Homoserine kinase subfamily.

The protein localises to the cytoplasm. The enzyme catalyses L-homoserine + ATP = O-phospho-L-homoserine + ADP + H(+). It participates in amino-acid biosynthesis; L-threonine biosynthesis; L-threonine from L-aspartate: step 4/5. In terms of biological role, catalyzes the ATP-dependent phosphorylation of L-homoserine to L-homoserine phosphate. This is Homoserine kinase from Bacillus pumilus (strain SAFR-032).